The primary structure comprises 87 residues: Small ribosomal subunit protein uS17 (87 aa).

Belongs to the universal ribosomal protein uS17 family. As to quaternary structure, part of the 30S ribosomal subunit.

In terms of biological role, one of the primary rRNA binding proteins, it binds specifically to the 5'-end of 16S ribosomal RNA. This Bacillus cytotoxicus (strain DSM 22905 / CIP 110041 / 391-98 / NVH 391-98) protein is Small ribosomal subunit protein uS17.